The sequence spans 369 residues: Protein VP6 (369 aa).

2 disordered regions span residues 17-169 and 184-208; these read KREL…LQGR and LDRIGGCSGNSKTEGEEAKAGGGDR. The segment covering 29–68 has biased composition (basic and acidic residues); sequence LREKGSTEAKSKLKEDGEKKNKSEKEENKIHDDRRVESQK. Residues 92 to 111 show a composition bias toward gly residues; the sequence is TGGGDGSAGARTGIGGGGVG. Composition is skewed to basic and acidic residues over residues 137-148 and 196-208; these read TGADRVANDDAT and TEGEEAKAGGGDR.

It belongs to the orbivirus VP6 family.

It is found in the virion. This African horse sickness virus (AHSV) protein is Protein VP6 (Segment-9).